A 471-amino-acid polypeptide reads, in one-letter code: ATP synthase subunit beta (471 aa).

153 to 160 (GGAGVGKT) provides a ligand contact to ATP.

Belongs to the ATPase alpha/beta chains family. In terms of assembly, F-type ATPases have 2 components, CF(1) - the catalytic core - and CF(0) - the membrane proton channel. CF(1) has five subunits: alpha(3), beta(3), gamma(1), delta(1), epsilon(1). CF(0) has four main subunits: a(1), b(1), b'(1) and c(9-12).

The protein localises to the cell inner membrane. It carries out the reaction ATP + H2O + 4 H(+)(in) = ADP + phosphate + 5 H(+)(out). Functionally, produces ATP from ADP in the presence of a proton gradient across the membrane. The catalytic sites are hosted primarily by the beta subunits. The protein is ATP synthase subunit beta of Methylibium petroleiphilum (strain ATCC BAA-1232 / LMG 22953 / PM1).